The sequence spans 597 residues: ATP-dependent lipid A-core flippase (597 aa).

The next 6 helical transmembrane spans lie at 26-46, 76-96, 138-158, 164-184, 263-283, and 292-312; these read LWPY…AMAV, WFVP…QYAS, AIVF…VTLV, VVFL…IVAV, QPLT…IAVV, and VGGF…LKHL. The ABC transmembrane type-1 domain maps to 38-321; that stretch reads IGAIVAMAVS…LMDVNQPLQR (284 aa). In terms of domain architecture, ABC transporter spans 353–590; sequence VEFRDVSFVY…DGLYAHLHRI (238 aa). Residue 390-397 participates in ATP binding; it reads GPSGSGKT.

This sequence belongs to the ABC transporter superfamily. Lipid exporter (TC 3.A.1.106) family. As to quaternary structure, homodimer.

It is found in the cell inner membrane. It carries out the reaction ATP + H2O + lipid A-core oligosaccharideSide 1 = ADP + phosphate + lipid A-core oligosaccharideSide 2.. Its function is as follows. Involved in lipopolysaccharide (LPS) biosynthesis. Translocates lipid A-core from the inner to the outer leaflet of the inner membrane. Transmembrane domains (TMD) form a pore in the inner membrane and the ATP-binding domain (NBD) is responsible for energy generation. The polypeptide is ATP-dependent lipid A-core flippase (Paraburkholderia xenovorans (strain LB400)).